A 736-amino-acid polypeptide reads, in one-letter code: Elongation factor 2 (736 aa).

The region spanning 19-262 (DQIRNIGIIA…MVIKFVPNPR (244 aa)) is the tr-type G domain. GTP contacts are provided by residues 28 to 35 (AHVDHGKT), 94 to 98 (DTPGH), and 148 to 151 (NKVD). His602 is subject to Diphthamide.

The protein belongs to the TRAFAC class translation factor GTPase superfamily. Classic translation factor GTPase family. EF-G/EF-2 subfamily.

It is found in the cytoplasm. Functionally, catalyzes the GTP-dependent ribosomal translocation step during translation elongation. During this step, the ribosome changes from the pre-translocational (PRE) to the post-translocational (POST) state as the newly formed A-site-bound peptidyl-tRNA and P-site-bound deacylated tRNA move to the P and E sites, respectively. Catalyzes the coordinated movement of the two tRNA molecules, the mRNA and conformational changes in the ribosome. The sequence is that of Elongation factor 2 (fusA) from Aeropyrum pernix (strain ATCC 700893 / DSM 11879 / JCM 9820 / NBRC 100138 / K1).